A 101-amino-acid chain; its full sequence is Small ribosomal subunit protein eS24 (101 aa).

The protein belongs to the eukaryotic ribosomal protein eS24 family.

The polypeptide is Small ribosomal subunit protein eS24 (Methanosarcina mazei (strain ATCC BAA-159 / DSM 3647 / Goe1 / Go1 / JCM 11833 / OCM 88) (Methanosarcina frisia)).